The chain runs to 235 residues: tRNA pseudouridine synthase B (235 aa).

Asp48 functions as the Nucleophile in the catalytic mechanism.

This sequence belongs to the pseudouridine synthase TruB family. Type 1 subfamily.

It catalyses the reaction uridine(55) in tRNA = pseudouridine(55) in tRNA. Responsible for synthesis of pseudouridine from uracil-55 in the psi GC loop of transfer RNAs. The protein is tRNA pseudouridine synthase B of Phocaeicola vulgatus (strain ATCC 8482 / DSM 1447 / JCM 5826 / CCUG 4940 / NBRC 14291 / NCTC 11154) (Bacteroides vulgatus).